A 312-amino-acid polypeptide reads, in one-letter code: Large ribosomal subunit protein uL10 (312 aa).

The segment at 287–312 (AAAAPAAKKEEPKEESDDDMGFGLFD) is disordered.

It belongs to the universal ribosomal protein uL10 family. As to quaternary structure, P0 forms a pentameric complex by interaction with dimers of P1 and P2. In terms of processing, phosphorylated.

In terms of biological role, ribosomal protein P0 is the functional equivalent of E.coli protein L10. The sequence is that of Large ribosomal subunit protein uL10 from Caenorhabditis elegans.